Here is a 149-residue protein sequence, read N- to C-terminus: Small ribosomal subunit protein eS19 (149 aa).

This sequence belongs to the eukaryotic ribosomal protein eS19 family.

The sequence is that of Small ribosomal subunit protein eS19 (RPS19) from Mya arenaria (Soft-shell clam).